The following is a 93-amino-acid chain: Large ribosomal subunit protein eL31 (93 aa).

The protein belongs to the eukaryotic ribosomal protein eL31 family.

This chain is Large ribosomal subunit protein eL31, found in Methanosarcina mazei (strain ATCC BAA-159 / DSM 3647 / Goe1 / Go1 / JCM 11833 / OCM 88) (Methanosarcina frisia).